Consider the following 314-residue polypeptide: Acetaldehyde dehydrogenase 2 (314 aa).

11 to 14 (SGNI) serves as a coordination point for NAD(+). Cys-129 acts as the Acyl-thioester intermediate in catalysis. NAD(+)-binding positions include 160-168 (SAGPGTRAN) and Asn-291.

Belongs to the acetaldehyde dehydrogenase family.

The enzyme catalyses acetaldehyde + NAD(+) + CoA = acetyl-CoA + NADH + H(+). The polypeptide is Acetaldehyde dehydrogenase 2 (Rhodococcus erythropolis (strain PR4 / NBRC 100887)).